The following is a 176-amino-acid chain: Translation initiation factor IF-3 (176 aa).

This sequence belongs to the IF-3 family. In terms of assembly, monomer.

The protein localises to the cytoplasm. Its function is as follows. IF-3 binds to the 30S ribosomal subunit and shifts the equilibrium between 70S ribosomes and their 50S and 30S subunits in favor of the free subunits, thus enhancing the availability of 30S subunits on which protein synthesis initiation begins. The polypeptide is Translation initiation factor IF-3 (Streptococcus pyogenes serotype M4 (strain MGAS10750)).